A 191-amino-acid chain; its full sequence is MGKRASKLRPEEVDELKAHTYFTESEIKQWHKGFRKDCPDGKLTLEGFTKIYQQFFPFGDPSKFANFVFNVFDENKDGFISFSEFLQALSVTSRGTVEEKLKWAFRLYDLDNDGYITRDELLDIVDAIYRMVGESVTLPEEENTPEKRVNRIFQVMDKNKDDQLTFEEFLEGSKEDPTIIQALTLCDSGQA.

G2 is lipidated: N-myristoyl glycine. 4 consecutive EF-hand domains span residues 24–59, 60–95, 96–131, and 144–179; these read ESEI…FPFG, DPSK…TSRG, TVEE…IYRM, and TPEK…DPTI. Ca(2+) contacts are provided by D73, N75, D77, E84, D109, D111, D113, Y115, E120, D157, N159, D161, Q163, and E168.

The protein belongs to the recoverin family.

The protein localises to the perikaryon. It localises to the cell projection. Its subcellular location is the growth cone. Functionally, neuronal calcium sensor, regulator of G protein-coupled receptor phosphorylation in a calcium dependent manner. Regulates neurite extension and branching by activity-dependent Ca(2+) influx in growth cones. The polypeptide is Neuronal calcium sensor 1 (Lymnaea stagnalis (Great pond snail)).